A 69-amino-acid polypeptide reads, in one-letter code: Sperm protamine P1 (69 aa).

Basic residues-rich tracts occupy residues 1–30 (MARF…RRGG) and 37–69 (KITR…RRRN). A disordered region spans residues 1–69 (MARFRPSRSR…SRRRRRRRRN (69 aa)).

It belongs to the protamine P1 family. Testis.

It localises to the nucleus. It is found in the chromosome. Protamines substitute for histones in the chromatin of sperm during the haploid phase of spermatogenesis. They compact sperm DNA into a highly condensed, stable and inactive complex. In Tachyglossus aculeatus aculeatus (Southeast Australian short-beaked echidna), this protein is Sperm protamine P1 (PRM1).